Here is a 200-residue protein sequence, read N- to C-terminus: Small ribosomal subunit protein uS4 (200 aa).

The segment covering 1 to 13 has biased composition (basic residues); it reads MARYRGPKQKIAR. Positions 1–44 are disordered; it reads MARYRGPKQKIARRFKEPIFGPSKALERKPYPPGQHGQSRRRRE. Residues 92–154 form the S4 RNA-binding domain; sequence ARLDNTVFRM…SQDLEVIQTN (63 aa).

This sequence belongs to the universal ribosomal protein uS4 family. As to quaternary structure, part of the 30S ribosomal subunit. Contacts protein S5. The interaction surface between S4 and S5 is involved in control of translational fidelity.

In terms of biological role, one of the primary rRNA binding proteins, it binds directly to 16S rRNA where it nucleates assembly of the body of the 30S subunit. Functionally, with S5 and S12 plays an important role in translational accuracy. In Salinibacter ruber (strain DSM 13855 / M31), this protein is Small ribosomal subunit protein uS4.